A 349-amino-acid polypeptide reads, in one-letter code: Divinyl chlorophyll a/b light-harvesting protein PcbB (349 aa).

Transmembrane regions (helical) follow at residues 27 to 47 (FIAAHAAHTGLIAFGCGAATL), 57 to 77 (LPMGHQSSLFLAHLASVGIGF), 91 to 113 (IAILHLILSMVYGGGGLLHSVYF), 201 to 221 (VMGGHAFLAFFQLGGGAFHIA), 241 to 261 (AILSWSLAGIGWMACVAAFWA), and 306 to 326 (LVNVHYYLGFFFIQGHLWHAL).

This sequence belongs to the PsbB/PsbC family. IsiA/Pcb subfamily. The antenna complex consists of divinyl chlorophylls (a and b) and divinyl chlorophyll a/b binding proteins and binds more divinyl chlorophyll b than does the antenna complex from high-light-adapted Prochlorococcus. Divinyl chlorophyll a serves as cofactor. The cofactor is divinyl chlorophyll b.

The protein localises to the cellular thylakoid membrane. Its function is as follows. The antenna complex functions as a light receptor, it captures and delivers excitation energy to photosystems II and I. The Prochlorales pcb genes are not related to higher plant LHCs. The chain is Divinyl chlorophyll a/b light-harvesting protein PcbB (pcbB) from Prochlorococcus marinus (strain SARG / CCMP1375 / SS120).